Reading from the N-terminus, the 399-residue chain is Tryptophan synthase beta chain (399 aa).

K92 carries the N6-(pyridoxal phosphate)lysine modification.

This sequence belongs to the TrpB family. As to quaternary structure, tetramer of two alpha and two beta chains. It depends on pyridoxal 5'-phosphate as a cofactor.

It carries out the reaction (1S,2R)-1-C-(indol-3-yl)glycerol 3-phosphate + L-serine = D-glyceraldehyde 3-phosphate + L-tryptophan + H2O. The protein operates within amino-acid biosynthesis; L-tryptophan biosynthesis; L-tryptophan from chorismate: step 5/5. In terms of biological role, the beta subunit is responsible for the synthesis of L-tryptophan from indole and L-serine. This is Tryptophan synthase beta chain from Bordetella pertussis (strain Tohama I / ATCC BAA-589 / NCTC 13251).